We begin with the raw amino-acid sequence, 169 residues long: Spore protein SP21 (169 aa).

Disordered regions lie at residues 1–21 (MADL…REWD) and 150–169 (QPKR…HIKA). Residues 47 to 159 (QGPPAFVPAF…QPKRIQVASS (113 aa)) enclose the sHSP domain.

The protein belongs to the small heat shock protein (HSP20) family.

Its function is as follows. May stabilize cellular components during stress and spore formation. The chain is Spore protein SP21 (hspA) from Stigmatella aurantiaca (strain DW4/3-1).